Reading from the N-terminus, the 318-residue chain is Coproporphyrin III ferrochelatase (318 aa).

Residues His-186 and Glu-268 each contribute to the Fe(2+) site.

The protein belongs to the ferrochelatase family.

Its subcellular location is the cytoplasm. It carries out the reaction Fe-coproporphyrin III + 2 H(+) = coproporphyrin III + Fe(2+). The protein operates within porphyrin-containing compound metabolism; protoheme biosynthesis. Involved in coproporphyrin-dependent heme b biosynthesis. Catalyzes the insertion of ferrous iron into coproporphyrin III to form Fe-coproporphyrin III. In Lactococcus lactis subsp. cremoris (strain SK11), this protein is Coproporphyrin III ferrochelatase.